Reading from the N-terminus, the 153-residue chain is UPF0178 protein Ccel_2994 (153 aa).

It belongs to the UPF0178 family.

The protein is UPF0178 protein Ccel_2994 of Ruminiclostridium cellulolyticum (strain ATCC 35319 / DSM 5812 / JCM 6584 / H10) (Clostridium cellulolyticum).